We begin with the raw amino-acid sequence, 485 residues long: UDP-N-acetylmuramate--L-alanine ligase (485 aa).

125 to 131 is a binding site for ATP; the sequence is GTHGKTT.

The protein belongs to the MurCDEF family.

It localises to the cytoplasm. The catalysed reaction is UDP-N-acetyl-alpha-D-muramate + L-alanine + ATP = UDP-N-acetyl-alpha-D-muramoyl-L-alanine + ADP + phosphate + H(+). It functions in the pathway cell wall biogenesis; peptidoglycan biosynthesis. Its function is as follows. Cell wall formation. The polypeptide is UDP-N-acetylmuramate--L-alanine ligase (Stutzerimonas stutzeri (strain A1501) (Pseudomonas stutzeri)).